The primary structure comprises 473 residues: Rop guanine nucleotide exchange factor 3 (473 aa).

The interval 1–28 (MENLSNPDENDDHQSPRSIDQNDQSAVE) is disordered. Positions 16–28 (PRSIDQNDQSAVE) are enriched in polar residues. In terms of domain architecture, PRONE spans 95–473 (LVVQEISEPE…YVDKTMRGSE (379 aa)).

Guanine-nucleotide exchange factor (GEF) that acts as an activator of Rop (Rho of plants) GTPases by promoting the exchange of GDP for GTP. In Arabidopsis thaliana (Mouse-ear cress), this protein is Rop guanine nucleotide exchange factor 3 (ROPGEF3).